The following is a 248-amino-acid chain: MSLFPSLTLLLLSVVATSYSETVTCEDSQKICPAVIACNSPGINGFPGKDGRDGTKGEKGEPGQGLRGLQGPPGKLGPPGNPGSSGSPGPKGQKGDPGESPDCESSLAASERKALQTEMARIKKWLTFSLGRQVGNKFFLTNGEMMTFDKVKALCAEFQASVATPRNAAENRAIQNLIKEEAFLGITDENTEGEFVDLTGNKLTYTNWNDGEPNNAGSNEDCVLLLKNGKWNDIPCSSSHLALCEFPI.

The N-terminal stretch at 1–20 is a signal peptide; the sequence is MSLFPSLTLLLLSVVATSYS. Positions 42–99 constitute a Collagen-like domain; that stretch reads GINGFPGKDGRDGTKGEKGEPGQGLRGLQGPPGKLGPPGNPGSSGSPGPKGQKGDPGE. A disordered region spans residues 43 to 111; the sequence is INGFPGKDGR…DCESSLAASE (69 aa). 4-hydroxyproline is present on Pro-47. Residues 49 to 61 are compositionally biased toward basic and acidic residues; it reads KDGRDGTKGEKGE. 4-hydroxyproline is present on residues Pro-73, Pro-79, Pro-82, and Pro-88. Low complexity predominate over residues 82–91; it reads PGSSGSPGPK. A coiled-coil region spans residues 112–130; it reads RKALQTEMARIKKWLTFSL. In terms of domain architecture, C-type lectin spans 134-245; sequence VGNKFFLTNG…CSSSHLALCE (112 aa). Disulfide bonds link Cys-155/Cys-244 and Cys-222/Cys-236.

In terms of assembly, oligomeric complex of 3 or more homotrimers. Interacts with MASP1 and MASP2. Interacts with MEP1A and MEP1B and may inhibit their catalytic activity. Hydroxylation on proline residues within the sequence motif, GXPG, is most likely to be 4-hydroxy as this fits the requirement for 4-hydroxylation in vertebrates.

The protein resides in the secreted. In terms of biological role, calcium-dependent lectin involved in innate immune defense. Binds mannose, fucose and N-acetylglucosamine on different microorganisms and activates the lectin complement pathway. Binds to late apoptotic cells, as well as to apoptotic blebs and to necrotic cells, but not to early apoptotic cells, facilitating their uptake by macrophages. The protein is Mannose-binding protein C (MBL2) of Macaca fascicularis (Crab-eating macaque).